A 379-amino-acid polypeptide reads, in one-letter code: Probable pectin lyase A (379 aa).

The first 20 residues, 1–20 (MKYSTIFSAAAAVFAGSAAA), serve as a signal peptide directing secretion. Disulfide bonds link Cys83/Cys102 and Cys92/Cys226. Residue Asn129 is glycosylated (N-linked (GlcNAc...) asparagine). The active site involves Arg256. Residues Cys322 and Cys330 are joined by a disulfide bond.

This sequence belongs to the polysaccharide lyase 1 family.

It is found in the secreted. It carries out the reaction Eliminative cleavage of (1-&gt;4)-alpha-D-galacturonan methyl ester to give oligosaccharides with 4-deoxy-6-O-methyl-alpha-D-galact-4-enuronosyl groups at their non-reducing ends.. In terms of biological role, pectinolytic enzymes consist of four classes of enzymes: pectin lyase, polygalacturonase, pectin methylesterase and rhamnogalacturonase. Among pectinolytic enzymes, pectin lyase is the most important in depolymerization of pectin, since it cleaves internal glycosidic bonds of highly methylated pectins. The polypeptide is Probable pectin lyase A (pelA) (Aspergillus niger (strain ATCC MYA-4892 / CBS 513.88 / FGSC A1513)).